Reading from the N-terminus, the 74-residue chain is MAKNSKYQDKQVDAILNDMIAVLEKHQAPVDLSLVVLGNMVTNLLVSSVGTNQRIALANAFSEALLNSVNKQKS.

Belongs to the UPF0352 family.

In Pasteurella multocida (strain Pm70), this protein is UPF0352 protein PM1884.